Consider the following 698-residue polypeptide: Polyribonucleotide nucleotidyltransferase (698 aa).

Mg(2+) is bound by residues Asp-485 and Asp-491. The KH domain maps to 552–611; sequence PRIHTIKINTDKIRDVIGKGGAVIRSLCEETGTTIEIEDDGTVKIAATSGEQADDAINRI. Residues 621 to 689 enclose the S1 motif domain; it reads GTIYTGKVVR…RQGRVRLSIK (69 aa).

This sequence belongs to the polyribonucleotide nucleotidyltransferase family. As to quaternary structure, component of the RNA degradosome, which is a multiprotein complex involved in RNA processing and mRNA degradation. Mg(2+) serves as cofactor.

It localises to the cytoplasm. It catalyses the reaction RNA(n+1) + phosphate = RNA(n) + a ribonucleoside 5'-diphosphate. Functionally, involved in mRNA degradation. Catalyzes the phosphorolysis of single-stranded polyribonucleotides processively in the 3'- to 5'-direction. The polypeptide is Polyribonucleotide nucleotidyltransferase (Psychromonas ingrahamii (strain DSM 17664 / CCUG 51855 / 37)).